The following is a 686-amino-acid chain: Zinc finger protein 7 (686 aa).

Residues Val-4–Ala-76 enclose the KRAB domain. Residues Lys-81 and Lys-101 each participate in a glycyl lysine isopeptide (Lys-Gly) (interchain with G-Cter in SUMO2) cross-link. A phosphoserine mark is found at Ser-126 and Ser-138. 6 consecutive C2H2-type zinc fingers follow at residues Ser-223–His-245, Tyr-250–His-272, Phe-278–His-300, Tyr-306–His-328, Tyr-334–His-356, and Tyr-362–His-384. Glycyl lysine isopeptide (Lys-Gly) (interchain with G-Cter in SUMO2) cross-links involve residues Lys-279 and Lys-292. A Glycyl lysine isopeptide (Lys-Gly) (interchain with G-Cter in SUMO2) cross-link involves residue Lys-393. 9 consecutive C2H2-type zinc fingers follow at residues Phe-413–His-435, Tyr-441–His-463, Phe-469–His-491, Tyr-497–His-519, Tyr-525–His-547, Tyr-553–His-575, Tyr-581–His-603, His-634–His-656, and Tyr-662–His-684.

This sequence belongs to the krueppel C2H2-type zinc-finger protein family.

The protein resides in the nucleus. Functionally, may be involved in transcriptional regulation. The polypeptide is Zinc finger protein 7 (ZNF7) (Pongo abelii (Sumatran orangutan)).